The primary structure comprises 390 residues: Sister chromatid cohesion protein DCC1 (390 aa).

The protein belongs to the DCC1 family. In terms of assembly, component of the ctf18-RFC complex which consists of ctf18, ctf8, dscc1 and the RFC complex.

It is found in the nucleus. In terms of biological role, loads pcna onto primed templates regulating velocity, spacing and restart activity of replication forks. May couple DNA replication to sister chromatid cohesion. The sequence is that of Sister chromatid cohesion protein DCC1 (dscc1) from Xenopus laevis (African clawed frog).